Reading from the N-terminus, the 473-residue chain is Mogroside IIIx synthase (473 aa).

H21 (proton acceptor) is an active-site residue. The Charge relay role is filled by D123. T274, Q337, W355, N356, S357, E360, D376, and Q377 together coordinate UDP-alpha-D-glucose.

The protein belongs to the UDP-glycosyltransferase family. As to expression, highly expressed in mature fruits.

It carries out the reaction mogroside IIE + UDP-alpha-D-glucose = mogroside IIIX + UDP + H(+). The enzyme catalyses mogroside III + UDP-alpha-D-glucose = siamenoside I + UDP + H(+). Its pathway is secondary metabolite biosynthesis; terpenoid biosynthesis. UDP-glycosyltransferase involved in the biosynthesis of cucurbitacin and mogroside tetracyclic triterpene natural products (e.g. siamenoside I and mogrosides IV, V and VI). Cucurbitacins have cytotoxic properties and exhibit deterrent taste as a defense barrier against herbivores. Mogrosides are nonsugar highly oxygenated compounds used as high-intensity zero-calorie sweeteners; they also possess pharmacological properties such as regulating immunity, lowering blood sugar and lipid levels, protecting the liver, and acting as antioxidants and antitumor agents. Catalyzes the branched glucosylations of mogroside II-E and mogroside III. The sequence is that of Mogroside IIIx synthase from Siraitia grosvenorii (Monk's fruit).